Here is a 302-residue protein sequence, read N- to C-terminus: Recombination-associated protein RdgC (302 aa).

This sequence belongs to the RdgC family.

It is found in the cytoplasm. The protein resides in the nucleoid. May be involved in recombination. The polypeptide is Recombination-associated protein RdgC (Xylella fastidiosa (strain M23)).